The chain runs to 324 residues: Beta-ketoacyl-[acyl-carrier-protein] synthase III (324 aa).

Active-site residues include Cys113 and His251. Residues 252–256 (QANKR) are ACP-binding. The active site involves Asn281.

It belongs to the thiolase-like superfamily. FabH family. In terms of assembly, homodimer.

It is found in the cytoplasm. It catalyses the reaction malonyl-[ACP] + acetyl-CoA + H(+) = 3-oxobutanoyl-[ACP] + CO2 + CoA. The protein operates within lipid metabolism; fatty acid biosynthesis. In terms of biological role, catalyzes the condensation reaction of fatty acid synthesis by the addition to an acyl acceptor of two carbons from malonyl-ACP. Catalyzes the first condensation reaction which initiates fatty acid synthesis and may therefore play a role in governing the total rate of fatty acid production. Possesses both acetoacetyl-ACP synthase and acetyl transacylase activities. Its substrate specificity determines the biosynthesis of branched-chain and/or straight-chain of fatty acids. This chain is Beta-ketoacyl-[acyl-carrier-protein] synthase III, found in Bartonella tribocorum (strain CIP 105476 / IBS 506).